The following is a 482-amino-acid chain: Putative metallophosphoesterase F40B5.2 (482 aa).

Transmembrane regions (helical) follow at residues 15-35 (MNLK…SIAI), 129-149 (ALMM…YIFL), 156-176 (IAIT…FLLI), and 205-225 (CYHI…GLYT). Residues Asp256, His258, Asp288, Asn319, His421, and His423 each coordinate a divalent metal cation.

The protein belongs to the metallophosphoesterase superfamily. LOC643853 family.

Its subcellular location is the membrane. The chain is Putative metallophosphoesterase F40B5.2 from Caenorhabditis elegans.